Reading from the N-terminus, the 301-residue chain is Ornithine carbamoyltransferase (301 aa).

Carbamoyl phosphate-binding positions include R100 and 127-130 (HPCQ). Residues N158, D221, and 225-226 (SM) each bind L-ornithine. Carbamoyl phosphate is bound by residues 260–261 (CL) and R288.

The protein belongs to the aspartate/ornithine carbamoyltransferase superfamily. OTCase family.

The protein resides in the cytoplasm. The catalysed reaction is carbamoyl phosphate + L-ornithine = L-citrulline + phosphate + H(+). The protein operates within amino-acid biosynthesis; L-arginine biosynthesis; L-arginine from L-ornithine and carbamoyl phosphate: step 1/3. Functionally, reversibly catalyzes the transfer of the carbamoyl group from carbamoyl phosphate (CP) to the N(epsilon) atom of ornithine (ORN) to produce L-citrulline. The chain is Ornithine carbamoyltransferase from Shewanella oneidensis (strain ATCC 700550 / JCM 31522 / CIP 106686 / LMG 19005 / NCIMB 14063 / MR-1).